The primary structure comprises 824 residues: Translation initiation factor IF-2 (824 aa).

A disordered region spans residues 1-234 (MSDQDGKKPL…RQKAMGGSVD (234 aa)). Basic and acidic residues-rich tracts occupy residues 59-75 (GGKR…DRRL) and 82-144 (KARE…RRNA). Over residues 145–159 (PPEAAAPAVDPAAAA) the composition is skewed to low complexity. The span at 170 to 186 (ARREPERDNKRENRSRG) shows a compositional bias: basic and acidic residues. A tr-type G domain is found at 321–491 (PRPPVITIMG…ALQAELLELK (171 aa)). Residues 330 to 337 (GHVDHGKT) form a G1 region. 330–337 (GHVDHGKT) lines the GTP pocket. Positions 355–359 (GITQH) are G2. Residues 377–380 (DTPG) form a G3 region. GTP contacts are provided by residues 377–381 (DTPGH) and 431–434 (NKID). A G4 region spans residues 431-434 (NKID). Positions 467–469 (SAM) are G5.

Belongs to the TRAFAC class translation factor GTPase superfamily. Classic translation factor GTPase family. IF-2 subfamily.

It is found in the cytoplasm. In terms of biological role, one of the essential components for the initiation of protein synthesis. Protects formylmethionyl-tRNA from spontaneous hydrolysis and promotes its binding to the 30S ribosomal subunits. Also involved in the hydrolysis of GTP during the formation of the 70S ribosomal complex. The polypeptide is Translation initiation factor IF-2 (Jannaschia sp. (strain CCS1)).